The following is a 339-amino-acid chain: tRNA N6-adenosine threonylcarbamoyltransferase (339 aa).

Positions 111 and 115 each coordinate Fe cation. Substrate-binding positions include 134–138 (LVSGG), D167, G180, and N272. D300 serves as a coordination point for Fe cation.

Belongs to the KAE1 / TsaD family. Fe(2+) serves as cofactor.

Its subcellular location is the cytoplasm. It carries out the reaction L-threonylcarbamoyladenylate + adenosine(37) in tRNA = N(6)-L-threonylcarbamoyladenosine(37) in tRNA + AMP + H(+). Required for the formation of a threonylcarbamoyl group on adenosine at position 37 (t(6)A37) in tRNAs that read codons beginning with adenine. Is involved in the transfer of the threonylcarbamoyl moiety of threonylcarbamoyl-AMP (TC-AMP) to the N6 group of A37, together with TsaE and TsaB. TsaD likely plays a direct catalytic role in this reaction. This Sodalis glossinidius (strain morsitans) protein is tRNA N6-adenosine threonylcarbamoyltransferase.